Reading from the N-terminus, the 520-residue chain is Transactivator/viroplasmin protein (520 aa).

Disordered regions lie at residues 32 to 51 and 487 to 520; these read GSSQ…KEEA and QDAS…KQVD. Residues 40 to 51 are compositionally biased toward basic and acidic residues; that stretch reads SLHRETPEKEEA.

Belongs to the caulimoviridae viroplasmin family.

The protein localises to the host cytoplasm. In terms of biological role, enhances the ribosomal termination-reinitiation event leading to the translation of major open reading frames on the polycistronic viral RNAs. This Arabidopsis thaliana (Mouse-ear cress) protein is Transactivator/viroplasmin protein.